A 273-amino-acid chain; its full sequence is Hemin import ATP-binding protein HmuV (273 aa).

One can recognise an ABC transporter domain in the interval 2-256; sequence LTAHHLDVAR…AHIAQCYGFA (255 aa). 34 to 41 is an ATP binding site; sequence GRNGAGKS.

The protein belongs to the ABC transporter superfamily. Heme (hemin) importer (TC 3.A.1.14.5) family. As to quaternary structure, the complex is composed of two ATP-binding proteins (HmuV), two transmembrane proteins (HmuU) and a solute-binding protein (HmuT).

It localises to the cell inner membrane. Its function is as follows. Part of the ABC transporter complex HmuTUV involved in hemin import. Responsible for energy coupling to the transport system. This chain is Hemin import ATP-binding protein HmuV, found in Burkholderia ambifaria (strain ATCC BAA-244 / DSM 16087 / CCUG 44356 / LMG 19182 / AMMD) (Burkholderia cepacia (strain AMMD)).